We begin with the raw amino-acid sequence, 729 residues long: uncharacterized protein (729 aa).

Belongs to the mimivirus L515/L516 family.

Its subcellular location is the virion. This is an uncharacterized protein from Acanthamoeba polyphaga mimivirus (APMV).